A 367-amino-acid chain; its full sequence is Glutamate 5-kinase (367 aa).

Residue Lys-10 participates in ATP binding. Ser-50, Asp-137, and Asn-149 together coordinate substrate. ATP contacts are provided by residues 169–170 (TD) and 211–217 (TGGMATK). A PUA domain is found at 275–353 (AGELVVDDGA…QQIGEILGYE (79 aa)).

The protein belongs to the glutamate 5-kinase family.

The protein resides in the cytoplasm. The enzyme catalyses L-glutamate + ATP = L-glutamyl 5-phosphate + ADP. It participates in amino-acid biosynthesis; L-proline biosynthesis; L-glutamate 5-semialdehyde from L-glutamate: step 1/2. Functionally, catalyzes the transfer of a phosphate group to glutamate to form L-glutamate 5-phosphate. The polypeptide is Glutamate 5-kinase (Erwinia tasmaniensis (strain DSM 17950 / CFBP 7177 / CIP 109463 / NCPPB 4357 / Et1/99)).